The chain runs to 255 residues: Taurine import ATP-binding protein TauB (255 aa).

The region spanning 2-229 (LQISHLYADY…RFVAGESSRS (228 aa)) is the ABC transporter domain. 34-41 (GPSGCGKT) contributes to the ATP binding site.

This sequence belongs to the ABC transporter superfamily. Taurine importer (TC 3.A.1.17.1) family. As to quaternary structure, the complex is composed of two ATP-binding proteins (TauB), two transmembrane proteins (TauC) and a solute-binding protein (TauA).

The protein localises to the cell inner membrane. The enzyme catalyses taurine(out) + ATP + H2O = taurine(in) + ADP + phosphate + H(+). Part of the ABC transporter complex TauABC involved in taurine import. Responsible for energy coupling to the transport system. The protein is Taurine import ATP-binding protein TauB of Shigella flexneri serotype 5b (strain 8401).